The sequence spans 180 residues: MIRRVLLLSLALLLAGCANEALFRPKPALESAADAPFSVSGRLSANLDGKGHVANFDWRHLPPRDEVAINSPLGNTVAKVLRDPGGVTLLADGKRWQADDVESLTRQVMGWPLPLSNLVWWIRGLPAPGVESRVDADGNLEQQGWHIRFIRDADVDSDHPKRVEMQREGLTVKVVVQSWQ.

A signal peptide spans 1–16 (MIRRVLLLSLALLLAG). Cys-17 is lipidated: N-palmitoyl cysteine. The S-diacylglycerol cysteine moiety is linked to residue Cys-17.

Belongs to the LolB family. In terms of assembly, monomer.

The protein localises to the cell outer membrane. In terms of biological role, plays a critical role in the incorporation of lipoproteins in the outer membrane after they are released by the LolA protein. This Chromobacterium violaceum (strain ATCC 12472 / DSM 30191 / JCM 1249 / CCUG 213 / NBRC 12614 / NCIMB 9131 / NCTC 9757 / MK) protein is Outer-membrane lipoprotein LolB.